Reading from the N-terminus, the 358-residue chain is Nicotinate-nucleotide--dimethylbenzimidazole phosphoribosyltransferase (358 aa).

Glutamate 323 acts as the Proton acceptor in catalysis.

Belongs to the CobT family.

The enzyme catalyses 5,6-dimethylbenzimidazole + nicotinate beta-D-ribonucleotide = alpha-ribazole 5'-phosphate + nicotinate + H(+). The protein operates within nucleoside biosynthesis; alpha-ribazole biosynthesis; alpha-ribazole from 5,6-dimethylbenzimidazole: step 1/2. Catalyzes the synthesis of alpha-ribazole-5'-phosphate from nicotinate mononucleotide (NAMN) and 5,6-dimethylbenzimidazole (DMB). The chain is Nicotinate-nucleotide--dimethylbenzimidazole phosphoribosyltransferase from Oleidesulfovibrio alaskensis (strain ATCC BAA-1058 / DSM 17464 / G20) (Desulfovibrio alaskensis).